The sequence spans 131 residues: Phosphoribosyl-AMP cyclohydrolase (131 aa).

Residue Asp-89 participates in Mg(2+) binding. Cys-90 is a Zn(2+) binding site. Residues Asp-91 and Asp-93 each coordinate Mg(2+). Zn(2+)-binding residues include Cys-106 and Cys-113.

Belongs to the PRA-CH family. As to quaternary structure, homodimer. Mg(2+) is required as a cofactor. Requires Zn(2+) as cofactor.

The protein localises to the cytoplasm. The enzyme catalyses 1-(5-phospho-beta-D-ribosyl)-5'-AMP + H2O = 1-(5-phospho-beta-D-ribosyl)-5-[(5-phospho-beta-D-ribosylamino)methylideneamino]imidazole-4-carboxamide. It participates in amino-acid biosynthesis; L-histidine biosynthesis; L-histidine from 5-phospho-alpha-D-ribose 1-diphosphate: step 3/9. In terms of biological role, catalyzes the hydrolysis of the adenine ring of phosphoribosyl-AMP. This Pyrobaculum aerophilum (strain ATCC 51768 / DSM 7523 / JCM 9630 / CIP 104966 / NBRC 100827 / IM2) protein is Phosphoribosyl-AMP cyclohydrolase.